A 486-amino-acid chain; its full sequence is MNKPVSIGLLQQPKPFFMIFFVELWERFGYYGVQGVLTVYFVQKLGFSQEQAFITFGAFAALVFGLISIGGYVGDHLLGTKRTIVLGAIVLAIGYFMTGLSILHPNLIFYALGTIAVGNGLFKANPASLLSKCYPPKDPRLDGAFTLFYMSINLGSLFSLALAPVIAEKFSYAVTYNICGIGLIIALLVYIFCRNTVRNIGSEPDHQRINYTNLFLVVAGSVVMVYVCAWLMHNVKIANIMLITLSVIVVFIFFREALKQDKIGRNKMFVAFILMLQAIVFFILYAQMPTSLNFFAIHNVHHQLLGFNINPVSFQALNPFWIVVASPILAVLYTHWGAKGKDLTMPAKFAVGMFLCSLGFLTAAAAGLWFADEQGLTSAWFIVLVYLFQGVGELMISALGLAMIAALVPQYLMGFILGMWYLTQATSSLLGGYVAALTAAPKGITDPLQTLPVYTSVFGKIGIATFIVAIIMAATVPLLNRMMQEK.

Residues Met1 to Arg27 are Cytoplasmic-facing. Residues Phe28–Ser48 traverse the membrane as a helical segment. Residues Gln49–Ala52 lie on the Periplasmic side of the membrane. The helical transmembrane segment at Phe53–Val73 threads the bilayer. At Gly74–Arg82 the chain is on the cytoplasmic side. A helical transmembrane segment spans residues Thr83–Leu103. Over His104 to Asn106 the chain is Periplasmic. Residues Leu107–Ala127 traverse the membrane as a helical segment. At Ser128–Thr146 the chain is on the cytoplasmic side. Residues Leu147–Ala167 form a helical membrane-spanning segment. Topologically, residues Glu168–Tyr172 are periplasmic. The chain crosses the membrane as a helical span at residues Ala173–Cys193. The Cytoplasmic segment spans residues Arg194–Tyr211. A helical membrane pass occupies residues Thr212–Met232. Residue His233 is a topological domain, periplasmic. Residues Asn234–Phe254 form a helical membrane-spanning segment. The Cytoplasmic portion of the chain corresponds to Arg255–Lys267. Residues Met268 to Met288 traverse the membrane as a helical segment. Topologically, residues Pro289–Pro311 are periplasmic. The chain crosses the membrane as a helical span at residues Val312–Leu332. Topologically, residues Tyr333–Lys348 are cytoplasmic. Residues Phe349 to Trp369 traverse the membrane as a helical segment. The Periplasmic portion of the chain corresponds to Phe370–Gly375. The chain crosses the membrane as a helical span at residues Leu376–Ile396. The Cytoplasmic segment spans residues Ser397–Met419. Residues Trp420–Ala440 form a helical membrane-spanning segment. Residues Pro441–Ser456 are Periplasmic-facing. The helical transmembrane segment at Val457–Pro477 threads the bilayer. At Leu478–Lys486 the chain is on the cytoplasmic side.

It belongs to the major facilitator superfamily. Proton-dependent oligopeptide transporter (POT/PTR) (TC 2.A.17) family. DtpB subfamily.

Its subcellular location is the cell inner membrane. Functionally, proton-dependent permease that transports di- and tripeptides. This is Dipeptide and tripeptide permease B from Photorhabdus luminescens (Xenorhabdus luminescens).